The sequence spans 289 residues: F-box protein PP2-A11 (289 aa).

Positions 23-69 (QPGLGDLPESCVALILQNLDPVEICRFSKLNTAFHGASWADFVWESK) constitute an F-box domain.

As to quaternary structure, part of a SCF (ASK-cullin-F-box) protein ligase complex. Interacts with SKP1A/ASK1.

It localises to the nucleus. It participates in protein modification; protein ubiquitination. In terms of biological role, component of SCF(ASK-cullin-F-box) E3 ubiquitin ligase complexes, which may mediate the ubiquitination and subsequent proteasomal degradation of target proteins. The protein is F-box protein PP2-A11 (PP2A11) of Arabidopsis thaliana (Mouse-ear cress).